A 257-amino-acid chain; its full sequence is Type III pantothenate kinase (257 aa).

ATP is bound at residue 6–13; it reads DSGNTNTV. 108 to 111 is a substrate binding site; that stretch reads GADR. Asp-110 serves as the catalytic Proton acceptor. A K(+)-binding site is contributed by Asp-130. Residue Thr-133 coordinates ATP. Residue Thr-185 participates in substrate binding.

It belongs to the type III pantothenate kinase family. As to quaternary structure, homodimer. NH4(+) serves as cofactor. The cofactor is K(+).

It localises to the cytoplasm. The enzyme catalyses (R)-pantothenate + ATP = (R)-4'-phosphopantothenate + ADP + H(+). It participates in cofactor biosynthesis; coenzyme A biosynthesis; CoA from (R)-pantothenate: step 1/5. In terms of biological role, catalyzes the phosphorylation of pantothenate (Pan), the first step in CoA biosynthesis. This Rhodospirillum rubrum (strain ATCC 11170 / ATH 1.1.1 / DSM 467 / LMG 4362 / NCIMB 8255 / S1) protein is Type III pantothenate kinase.